The primary structure comprises 178 residues: Ribosome maturation factor RimP (178 aa).

The protein belongs to the RimP family.

It is found in the cytoplasm. Functionally, required for maturation of 30S ribosomal subunits. The protein is Ribosome maturation factor RimP of Mycobacterium avium (strain 104).